The sequence spans 378 residues: 3-dehydroquinate synthase (378 aa).

NAD(+)-binding positions include 115–119 (GVVGD), 139–140 (TS), lysine 152, and lysine 161. The Zn(2+) site is built by glutamate 194, histidine 256, and histidine 275.

It belongs to the sugar phosphate cyclases superfamily. Dehydroquinate synthase family. It depends on Co(2+) as a cofactor. Zn(2+) serves as cofactor. Requires NAD(+) as cofactor.

The protein resides in the cytoplasm. It catalyses the reaction 7-phospho-2-dehydro-3-deoxy-D-arabino-heptonate = 3-dehydroquinate + phosphate. The protein operates within metabolic intermediate biosynthesis; chorismate biosynthesis; chorismate from D-erythrose 4-phosphate and phosphoenolpyruvate: step 2/7. Catalyzes the conversion of 3-deoxy-D-arabino-heptulosonate 7-phosphate (DAHP) to dehydroquinate (DHQ). In Brucella canis (strain ATCC 23365 / NCTC 10854 / RM-666), this protein is 3-dehydroquinate synthase.